Consider the following 954-residue polypeptide: Isoleucine--tRNA ligase (954 aa).

The short motif at 58-68 is the 'HIGH' region element; that stretch reads PYANGDIHIGH. Residue Glu-572 participates in L-isoleucyl-5'-AMP binding. The 'KMSKS' region motif lies at 613-617; sequence KMSKS. Lys-616 provides a ligand contact to ATP. Cys-917, Cys-920, Cys-937, and Cys-940 together coordinate Zn(2+).

The protein belongs to the class-I aminoacyl-tRNA synthetase family. IleS type 1 subfamily. As to quaternary structure, monomer. The cofactor is Zn(2+).

The protein resides in the cytoplasm. The catalysed reaction is tRNA(Ile) + L-isoleucine + ATP = L-isoleucyl-tRNA(Ile) + AMP + diphosphate. Functionally, catalyzes the attachment of isoleucine to tRNA(Ile). As IleRS can inadvertently accommodate and process structurally similar amino acids such as valine, to avoid such errors it has two additional distinct tRNA(Ile)-dependent editing activities. One activity is designated as 'pretransfer' editing and involves the hydrolysis of activated Val-AMP. The other activity is designated 'posttransfer' editing and involves deacylation of mischarged Val-tRNA(Ile). This chain is Isoleucine--tRNA ligase, found in Photobacterium profundum (strain SS9).